The primary structure comprises 244 residues: MIPQVVTSETVAMISPNGMSLPQTDKPQPFHQWQDSLKKHLKAEIKVMAAIQIMCAVMVLSLGIILASVPSNLHFTSVFSVLLKSGYPFIGALFFIVSGILSIVTETKSTKILVDSSLTLNILSVSFAFMGIIIISVSLAGLHPASEQCLQSKELRPTEYHYYQFLDRNECFAAKSVLAGVFSLMLISTMLELGLAVLTAMLWWKQSHSNIPGNVMFLPHSSNNDSNMESKVLCNPSYEEQLVC.

At 1–46 (MIPQVVTSETVAMISPNGMSLPQTDKPQPFHQWQDSLKKHLKAEIK) the chain is on the cytoplasmic side. The chain crosses the membrane as a helical span at residues 47-67 (VMAAIQIMCAVMVLSLGIILA). The Extracellular segment spans residues 68-84 (SVPSNLHFTSVFSVLLK). Residues 85–105 (SGYPFIGALFFIVSGILSIVT) form a helical membrane-spanning segment. The Cytoplasmic portion of the chain corresponds to 106 to 121 (ETKSTKILVDSSLTLN). The chain crosses the membrane as a helical span at residues 122 to 142 (ILSVSFAFMGIIIISVSLAGL). Topologically, residues 143–176 (HPASEQCLQSKELRPTEYHYYQFLDRNECFAAKS) are extracellular. Residues 177-197 (VLAGVFSLMLISTMLELGLAV) form a helical membrane-spanning segment. The Cytoplasmic segment spans residues 198–244 (LTAMLWWKQSHSNIPGNVMFLPHSSNNDSNMESKVLCNPSYEEQLVC).

It belongs to the MS4A family. As to expression, expressed at high levels in thymus, spleen, and peripheral lymph nodes, with less abundant levels in non-lymphoid tissues.

Its subcellular location is the membrane. In terms of biological role, may be involved in signal transduction as a component of a multimeric receptor complex. This is Membrane-spanning 4-domains subfamily A member 6B (Ms4a6b) from Mus musculus (Mouse).